A 478-amino-acid chain; its full sequence is Glycogen synthase (478 aa).

Position 16 (Lys16) interacts with ADP-alpha-D-glucose.

Belongs to the glycosyltransferase 1 family. Bacterial/plant glycogen synthase subfamily.

The enzyme catalyses [(1-&gt;4)-alpha-D-glucosyl](n) + ADP-alpha-D-glucose = [(1-&gt;4)-alpha-D-glucosyl](n+1) + ADP + H(+). Its pathway is glycan biosynthesis; glycogen biosynthesis. Its function is as follows. Synthesizes alpha-1,4-glucan chains using ADP-glucose. The chain is Glycogen synthase from Lachnoclostridium phytofermentans (strain ATCC 700394 / DSM 18823 / ISDg) (Clostridium phytofermentans).